A 116-amino-acid polypeptide reads, in one-letter code: Ribonuclease P protein component (116 aa).

It belongs to the RnpA family. In terms of assembly, consists of a catalytic RNA component (M1 or rnpB) and a protein subunit.

It carries out the reaction Endonucleolytic cleavage of RNA, removing 5'-extranucleotides from tRNA precursor.. Functionally, RNaseP catalyzes the removal of the 5'-leader sequence from pre-tRNA to produce the mature 5'-terminus. It can also cleave other RNA substrates such as 4.5S RNA. The protein component plays an auxiliary but essential role in vivo by binding to the 5'-leader sequence and broadening the substrate specificity of the ribozyme. This Leuconostoc citreum (strain KM20) protein is Ribonuclease P protein component.